The following is a 502-amino-acid chain: ATP synthase subunit alpha (502 aa).

Residues 115–135 (VDGLGPINTTNTRPIESPAPG) form a disordered region. 169–176 (GDRQTGKT) contacts ATP.

This sequence belongs to the ATPase alpha/beta chains family. F-type ATPases have 2 components, CF(1) - the catalytic core - and CF(0) - the membrane proton channel. CF(1) has five subunits: alpha(3), beta(3), gamma(1), delta(1), epsilon(1). CF(0) has three main subunits: a(1), b(2) and c(9-12). The alpha and beta chains form an alternating ring which encloses part of the gamma chain. CF(1) is attached to CF(0) by a central stalk formed by the gamma and epsilon chains, while a peripheral stalk is formed by the delta and b chains.

The protein localises to the cell membrane. It carries out the reaction ATP + H2O + 4 H(+)(in) = ADP + phosphate + 5 H(+)(out). In terms of biological role, produces ATP from ADP in the presence of a proton gradient across the membrane. The alpha chain is a regulatory subunit. The sequence is that of ATP synthase subunit alpha from Bacillus mycoides (strain KBAB4) (Bacillus weihenstephanensis).